Here is a 184-residue protein sequence, read N- to C-terminus: Ribosome maturation factor RimM (184 aa).

A PRC barrel domain is found at 93–165; sequence DEGWYEHELV…YILITPPSGL (73 aa).

The protein belongs to the RimM family. In terms of assembly, binds ribosomal protein uS19.

It is found in the cytoplasm. Its function is as follows. An accessory protein needed during the final step in the assembly of 30S ribosomal subunit, possibly for assembly of the head region. Essential for efficient processing of 16S rRNA. May be needed both before and after RbfA during the maturation of 16S rRNA. It has affinity for free ribosomal 30S subunits but not for 70S ribosomes. The sequence is that of Ribosome maturation factor RimM from Paenarthrobacter aurescens (strain TC1).